The sequence spans 361 residues: G-protein coupled receptor 52 (361 aa).

Over 1–44 the chain is Extracellular; it reads MNESRWTEWRILNMSSSIVNVSEHHSCPLGFGHYSVEDVCIFET. Residues Asn2, Asn13, and Asn20 are each glycosylated (N-linked (GlcNAc...) asparagine). A helical membrane pass occupies residues 45-65; that stretch reads VVIVLLTFLIISGNLTVIFVF. Topologically, residues 66-81 are cytoplasmic; that stretch reads HCAPLLHHYTTSYFIQ. Residues 82-102 traverse the membrane as a helical segment; sequence TMAYADLLVGVTCLVPTLSLL. Residues 103 to 115 are Extracellular-facing; that stretch reads HYSTGVHESLTCQ. An intrachain disulfide couples Cys114 to Cys193. The helical transmembrane segment at 116–136 threads the bilayer; sequence VFGYIISVLKSVSMACLACIS. Topologically, residues 137–159 are cytoplasmic; the sequence is VDRYLAITKPLSYNQLVTPCRLR. The chain crosses the membrane as a helical span at residues 160–180; that stretch reads ICIIMIWIYSCLIFLPSFFGW. The Extracellular portion of the chain corresponds to 181–205; sequence GKPGYHGDIFEWCATSWLTSAYFTC. A helical transmembrane segment spans residues 206 to 226; that stretch reads FIVCLLYAPAALVVCFTYFHI. The Cytoplasmic portion of the chain corresponds to 227 to 265; it reads FKICRQHTKEINDRRARFPSHEVEASREAGHSPDRRYAM. A helical transmembrane segment spans residues 266 to 286; it reads VLFRITSVFYMLWLPYIIYFL. The Extracellular segment spans residues 287-296; that stretch reads LESSRVLDNP. Residues 297–317 traverse the membrane as a helical segment; it reads TLSFLTTWLAISNSFCNCVIY. The Cytoplasmic portion of the chain corresponds to 318 to 361; it reads SLSNSVFRLGLRRLSETMCTSCVCAKDQEAQDPKPRRRANSCSI.

The protein belongs to the G-protein coupled receptor 1 family. Expressed in brain, especially in striatum. Expressed in the striatum, nucleus accumbens, and lateral globus pallidus.

The protein localises to the cell membrane. G- protein coupled receptor activated by antipsychotics reserpine leading to an increase in intracellular cAMP and its internalization. May play a role in locomotor activity through modulation of dopamine, NMDA and ADORA2A-induced locomotor activity. These behavioral changes are accompanied by modulation of the dopamine receptor signaling pathway in striatum. Modulates HTT level via cAMP-dependent but PKA independent mechanisms throught activation of RAB39B that translocates HTT to the endoplasmic reticulum, thus avoiding proteasome degradation. This chain is G-protein coupled receptor 52, found in Mus musculus (Mouse).